The primary structure comprises 142 residues: Large ribosomal subunit protein uL11 (142 aa).

It belongs to the universal ribosomal protein uL11 family. In terms of assembly, part of the ribosomal stalk of the 50S ribosomal subunit. Interacts with L10 and the large rRNA to form the base of the stalk. L10 forms an elongated spine to which L12 dimers bind in a sequential fashion forming a multimeric L10(L12)X complex. One or more lysine residues are methylated.

Functionally, forms part of the ribosomal stalk which helps the ribosome interact with GTP-bound translation factors. This Mycobacterium ulcerans (strain Agy99) protein is Large ribosomal subunit protein uL11.